Here is a 118-residue protein sequence, read N- to C-terminus: UPF0102 protein CMM_1377 (118 aa).

The protein belongs to the UPF0102 family.

The polypeptide is UPF0102 protein CMM_1377 (Clavibacter michiganensis subsp. michiganensis (strain NCPPB 382)).